The following is a 144-amino-acid chain: 3-hydroxyacyl-[acyl-carrier-protein] dehydratase FabZ (144 aa).

The active site involves His-49.

The protein belongs to the thioester dehydratase family. FabZ subfamily.

Its subcellular location is the cytoplasm. It catalyses the reaction a (3R)-hydroxyacyl-[ACP] = a (2E)-enoyl-[ACP] + H2O. Involved in unsaturated fatty acids biosynthesis. Catalyzes the dehydration of short chain beta-hydroxyacyl-ACPs and long chain saturated and unsaturated beta-hydroxyacyl-ACPs. This is 3-hydroxyacyl-[acyl-carrier-protein] dehydratase FabZ from Clostridium kluyveri (strain NBRC 12016).